A 654-amino-acid polypeptide reads, in one-letter code: Fructose-1,6-bisphosphatase class 3 (654 aa).

The disordered stretch occupies residues 288–307 (NPAFKPKKRPDKHERLTQRE). The segment covering 298–307 (DKHERLTQRE) has biased composition (basic and acidic residues).

This sequence belongs to the FBPase class 3 family. Mn(2+) serves as cofactor.

The enzyme catalyses beta-D-fructose 1,6-bisphosphate + H2O = beta-D-fructose 6-phosphate + phosphate. Its pathway is carbohydrate biosynthesis; gluconeogenesis. The protein is Fructose-1,6-bisphosphatase class 3 of Staphylococcus aureus (strain bovine RF122 / ET3-1).